The following is a 295-amino-acid chain: Small ribosomal subunit protein uS2 (295 aa).

The protein belongs to the universal ribosomal protein uS2 family.

The polypeptide is Small ribosomal subunit protein uS2 (Rickettsia canadensis (strain McKiel)).